The sequence spans 31 residues: Malate dehydrogenase, mitochondrial (31 aa).

Residues glycine 9–lysine 19 and aspartate 20–lysine 31 each bind NAD(+).

It belongs to the LDH/MDH superfamily. MDH type 1 family. In terms of assembly, homodimer.

The protein localises to the mitochondrion matrix. The catalysed reaction is (S)-malate + NAD(+) = oxaloacetate + NADH + H(+). The polypeptide is Malate dehydrogenase, mitochondrial (Imperata cylindrica (Cogon grass)).